Consider the following 115-residue polypeptide: T cell receptor beta variable 11-1 (115 aa).

The first 21 residues, 1-21 (MSTRLLCWMALCLLGAELSEA), serve as a signal peptide directing secretion. The region spanning 22–115 (EVAQSPRYKI…SAMYLCASSL (94 aa)) is the Ig-like domain. A disulfide bond links C42 and C111.

As to quaternary structure, alpha-beta TR is a heterodimer composed of an alpha and beta chain; disulfide-linked. The alpha-beta TR is associated with the transmembrane signaling CD3 coreceptor proteins to form the TR-CD3 (TcR or TCR). The assembly of alpha-beta TR heterodimers with CD3 occurs in the endoplasmic reticulum where a single alpha-beta TR heterodimer associates with one CD3D-CD3E heterodimer, one CD3G-CD3E heterodimer and one CD247 homodimer forming a stable octameric structure. CD3D-CD3E and CD3G-CD3E heterodimers preferentially associate with TR alpha and TR beta chains, respectively. The association of the CD247 homodimer is the last step of TcR assembly in the endoplasmic reticulum and is required for transport to the cell surface.

The protein localises to the cell membrane. Functionally, v region of the variable domain of T cell receptor (TR) beta chain that participates in the antigen recognition. Alpha-beta T cell receptors are antigen specific receptors which are essential to the immune response and are present on the cell surface of T lymphocytes. Recognize peptide-major histocompatibility (MH) (pMH) complexes that are displayed by antigen presenting cells (APC), a prerequisite for efficient T cell adaptive immunity against pathogens. Binding of alpha-beta TR to pMH complex initiates TR-CD3 clustering on the cell surface and intracellular activation of LCK that phosphorylates the ITAM motifs of CD3G, CD3D, CD3E and CD247 enabling the recruitment of ZAP70. In turn ZAP70 phosphorylates LAT, which recruits numerous signaling molecules to form the LAT signalosome. The LAT signalosome propagates signal branching to three major signaling pathways, the calcium, the mitogen-activated protein kinase (MAPK) kinase and the nuclear factor NF-kappa-B (NF-kB) pathways, leading to the mobilization of transcription factors that are critical for gene expression and essential for T cell growth and differentiation. The T cell repertoire is generated in the thymus, by V-(D)-J rearrangement. This repertoire is then shaped by intrathymic selection events to generate a peripheral T cell pool of self-MH restricted, non-autoaggressive T cells. Post-thymic interaction of alpha-beta TR with the pMH complexes shapes TR structural and functional avidity. This chain is T cell receptor beta variable 11-1, found in Homo sapiens (Human).